Here is a 179-residue protein sequence, read N- to C-terminus: Peptide methionine sulfoxide reductase MsrA (179 aa).

The active site involves cysteine 14.

This sequence belongs to the MsrA Met sulfoxide reductase family.

It catalyses the reaction L-methionyl-[protein] + [thioredoxin]-disulfide + H2O = L-methionyl-(S)-S-oxide-[protein] + [thioredoxin]-dithiol. It carries out the reaction [thioredoxin]-disulfide + L-methionine + H2O = L-methionine (S)-S-oxide + [thioredoxin]-dithiol. Its function is as follows. Has an important function as a repair enzyme for proteins that have been inactivated by oxidation. Catalyzes the reversible oxidation-reduction of methionine sulfoxide in proteins to methionine. This is Peptide methionine sulfoxide reductase MsrA from Nitrobacter winogradskyi (strain ATCC 25391 / DSM 10237 / CIP 104748 / NCIMB 11846 / Nb-255).